The sequence spans 214 residues: Heat shock 70 kDa protein cognate 1 (214 aa).

The protein belongs to the heat shock protein 70 family.

This Drosophila simulans (Fruit fly) protein is Heat shock 70 kDa protein cognate 1 (Hsc70-1).